A 362-amino-acid polypeptide reads, in one-letter code: MLKNKGHSSKKDNLAVNAVALQDHILHDLQLRNLSVADHSKTQVQKKENKSLKRDTKAIIDTGLKKTTQCPKLEDSEKEYVLDPKPPPLTLAQKLGLIGPPPPPLSSDEWEKVKQRSLLQGDSVQPCPICKEEFELRPQVLLSCSHVFHKACLQAFEKFTNKKTCPLCRKNQYQTRVIHDGARLFRIKCVTRIQAYWRGCVVRKWYRNLRKTVPPTDAKLRKKFFEKKFTEISHRILCSYNTNIEELFAEIDQCLAINRSVLQQLEEKCGHEITEEEWEKIQVQALRRETHECSICLAPLSAAGGQRVGAGRRSREMALLSCSHVFHHACLLALEEFSVGDRPPFHACPLCRSCYQKKILEC.

An RING-type 1; atypical zinc finger spans residues 127 to 169 (CPICKEEFELRPQVLLSCSHVFHKACLQAFEKFTNKKTCPLCR). The IQ domain occupies 186–215 (RIKCVTRIQAYWRGCVVRKWYRNLRKTVPP). The RING-type 2; atypical zinc finger occupies 293–352 (CSICLAPLSAAGGQRVGAGRRSREMALLSCSHVFHHACLLALEEFSVGDRPPFHACPLCR).

As to expression, highly expressed in testis, less abundant in ovary.

The protein localises to the cytoplasm. Its function is as follows. May play a role in sperm formation. The chain is RING finger protein 32 (RNF32) from Homo sapiens (Human).